The sequence spans 278 residues: 2-heptyl-3-hydroxy-4-quinolone dioxygenase AqdC1 (278 aa).

Residues 29–158 enclose the AB hydrolase-1 domain; sequence PTIVMLPGWC…GWVDSCRALF (130 aa). A substrate-binding site is contributed by H103. Residue H250 is the Proton donor/acceptor of the active site.

Belongs to the AB hydrolase superfamily.

It catalyses the reaction 2-heptyl-3-hydroxy-4(1H)-quinolone + O2 = N-octanoylanthranilate + CO + H(+). Involved in the degradation of the Pseudomonas aeruginosa quorum sensing signal molecules HHQ (2-heptyl-4-quinolone) and PQS (2-heptyl-3-hydroxy-4-quinolone) to anthranilic acid. Catalyzes the cleavage of PQS to form N-octanoylanthranilic acid and carbon monoxide. The chain is 2-heptyl-3-hydroxy-4-quinolone dioxygenase AqdC1 from Rhodococcus erythropolis (Arthrobacter picolinophilus).